The following is a 527-amino-acid chain: MTADLLPVRRALLSVSDKTGLVELATALAARGVELLSTGGTAKAIRDAGLAVKDVADVTGFPEMMDGRVKTLHPMVHGGLLGRSGLDDAVMAEHGIGAIDLLVLNLYPFESVTAKADCSLADAVENIDIGGPAMLRSAAKNFARVAVATDPSQYAELLASLEANNGQLTAATRFAFSVAAFNRVAQYDAAISNYLSAVTATDTAVPVRAEYPAQMNSTFVKVMDLRYGENPHQSGAFYRDLYPVPGTLATFQQLQGKELSYNNLADADAAWECVRQFDAPACVIVKHANPCGVAVGAGNGDAYELAYATDPTSAFGGIIAFNKPLDAATAKVILDRQFVEVLIAPDYEPAALEYAQKKANVRVLRIPHGDGLNNFDNKRVGSGLLLQSSDNRGMTRDELKVVSKLAPTDKQFTDLLFAWKVAKFVKSNAIVYAKDNRTIGVGAGQMSRVYSARIAGIKAADANLVVEGSVMASDAFFPFRDGIDAAAAAGIKAVIQPGGSMRDAEVIAAADEHGLAMVFTGVRHFRH.

In terms of domain architecture, MGS-like spans 1 to 149 (MTADLLPVRR…KNFARVAVAT (149 aa)).

Belongs to the PurH family.

It carries out the reaction (6R)-10-formyltetrahydrofolate + 5-amino-1-(5-phospho-beta-D-ribosyl)imidazole-4-carboxamide = 5-formamido-1-(5-phospho-D-ribosyl)imidazole-4-carboxamide + (6S)-5,6,7,8-tetrahydrofolate. The catalysed reaction is IMP + H2O = 5-formamido-1-(5-phospho-D-ribosyl)imidazole-4-carboxamide. It functions in the pathway purine metabolism; IMP biosynthesis via de novo pathway; 5-formamido-1-(5-phospho-D-ribosyl)imidazole-4-carboxamide from 5-amino-1-(5-phospho-D-ribosyl)imidazole-4-carboxamide (10-formyl THF route): step 1/1. The protein operates within purine metabolism; IMP biosynthesis via de novo pathway; IMP from 5-formamido-1-(5-phospho-D-ribosyl)imidazole-4-carboxamide: step 1/1. This Stenotrophomonas maltophilia (strain R551-3) protein is Bifunctional purine biosynthesis protein PurH.